Here is a 207-residue protein sequence, read N- to C-terminus: Ciliary microtubule-associated protein 3 (207 aa).

Interacts with proteins involved in ciliary transport, including ARL13B, CETN1, KIF3A, RAB6A, RAB8A, TUBB1 and TUBG1. Interacts with AURKA. As to expression, expressed in tissues rich in ciliated cells, such as lung, kidney, vas deferens and testis. Both isoforms 1 and 2 are expressed in testis.

It localises to the golgi apparatus. Its subcellular location is the golgi stack. The protein resides in the trans-Golgi network. The protein localises to the nucleus. It is found in the cytoplasm. It localises to the cytoplasmic vesicle. Its function is as follows. During primary cilia disassembly, involved in cilia disassembly. Required specifically to control cilia retraction as well as the liberation and duplication of the basal body/centrosome. May act by stimulating AURKA activity at the basal body in a cell cycle-dependent manner. This is Ciliary microtubule-associated protein 3 (Cimap3) from Mus musculus (Mouse).